Consider the following 146-residue polypeptide: MSIISQIEACDFERLYEIEQQAHLVPWSFGTLKNNQGERYLNLKLIENNQIIGFAICQTVLDEATLFNIAILPTYQGCGFGKLLLGKLIFQLKEKGVQTLWLEVRESNSARFLYEKIGFNEVDIRKNYYPKPSGGRENAVVMACYL.

The N-acetyltransferase domain maps to 2-146 (SIISQIEACD…ENAVVMACYL (145 aa)). 69–71 (IAI) provides a ligand contact to acetyl-CoA. E103 (proton acceptor) is an active-site residue. N108 contacts acetyl-CoA. Y114 acts as the Proton donor in catalysis.

Belongs to the acetyltransferase family. RimI subfamily.

It localises to the cytoplasm. It catalyses the reaction N-terminal L-alanyl-[ribosomal protein bS18] + acetyl-CoA = N-terminal N(alpha)-acetyl-L-alanyl-[ribosomal protein bS18] + CoA + H(+). Its function is as follows. Acetylates the N-terminal alanine of ribosomal protein bS18. The chain is [Ribosomal protein bS18]-alanine N-acetyltransferase from Haemophilus influenzae (strain ATCC 51907 / DSM 11121 / KW20 / Rd).